The chain runs to 232 residues: Chaperone protein CssC (232 aa).

Residues M1–E20 form the signal peptide.

It belongs to the periplasmic pilus chaperone family.

Its subcellular location is the periplasm. Functionally, involved in the biogenesis of the CS6 fimbria. The protein is Chaperone protein CssC (cssC) of Escherichia coli.